The sequence spans 444 residues: Tol-Pal system protein TolB (444 aa).

A signal peptide spans 1-19 (MRNIIYFILSLLFSVTSYA).

Belongs to the TolB family. The Tol-Pal system is composed of five core proteins: the inner membrane proteins TolA, TolQ and TolR, the periplasmic protein TolB and the outer membrane protein Pal. They form a network linking the inner and outer membranes and the peptidoglycan layer.

The protein resides in the periplasm. In terms of biological role, part of the Tol-Pal system, which plays a role in outer membrane invagination during cell division and is important for maintaining outer membrane integrity. This is Tol-Pal system protein TolB from Rickettsia rickettsii (strain Iowa).